A 1551-amino-acid chain; its full sequence is Pentafunctional AROM polypeptide (1551 aa).

The 3-dehydroquinate synthase stretch occupies residues 1–379 (MSIEKVPILG…YQLKAHQVSK (379 aa)). NAD(+)-binding positions include 42–44 (DTN), 80–83 (ENNK), 111–113 (GGV), and Asp-116. Position 127 (Arg-127) interacts with 7-phospho-2-dehydro-3-deoxy-D-arabino-heptonate. An NAD(+)-binding site is contributed by 136 to 137 (TT). Positions 143 and 149 each coordinate 7-phospho-2-dehydro-3-deoxy-D-arabino-heptonate. Position 158 (Lys-158) interacts with NAD(+). Position 159 (Asn-159) interacts with 7-phospho-2-dehydro-3-deoxy-D-arabino-heptonate. Residues 176–179 (FLET) and Asn-187 contribute to the NAD(+) site. Glu-191 lines the Zn(2+) pocket. Residues 191–194 (EVVK) and Lys-243 contribute to the 7-phospho-2-dehydro-3-deoxy-D-arabino-heptonate site. The active-site Proton acceptor; for 3-dehydroquinate synthase activity is the Glu-253. Residues 257 to 261 (RNLLN) and His-264 each bind 7-phospho-2-dehydro-3-deoxy-D-arabino-heptonate. His-264 is a Zn(2+) binding site. Residue His-268 is the Proton acceptor; for 3-dehydroquinate synthase activity of the active site. His-280 and Lys-351 together coordinate 7-phospho-2-dehydro-3-deoxy-D-arabino-heptonate. His-280 serves as a coordination point for Zn(2+). The tract at residues 392–838 (VHPFTNPPKE…WDILHSKFKI (447 aa)) is EPSP synthase. The tract at residues 858 to 1048 (DKSIIVIGMR…VPAGRSAAVV (191 aa)) is shikimate kinase. 865 to 872 (GMRGTGKS) is an ATP binding site. The segment at 1049–1258 (LTSPDLNEVV…NDEEFLTIGE (210 aa)) is 3-dehydroquinase. Residue Arg-1194 is the Schiff-base intermediate with substrate; for 3-dehydroquinate dehydratase activity of the active site. Residues 1271–1551 (AKKFWVIGSP…EIIHRAVVEE (281 aa)) are shikimate dehydrogenase.

It in the N-terminal section; belongs to the sugar phosphate cyclases superfamily. Dehydroquinate synthase family. In the 2nd section; belongs to the EPSP synthase family. This sequence in the 3rd section; belongs to the shikimate kinase family. The protein in the 4th section; belongs to the type-I 3-dehydroquinase family. It in the C-terminal section; belongs to the shikimate dehydrogenase family. Homodimer. It depends on Zn(2+) as a cofactor.

It is found in the cytoplasm. The catalysed reaction is 7-phospho-2-dehydro-3-deoxy-D-arabino-heptonate = 3-dehydroquinate + phosphate. It carries out the reaction 3-dehydroquinate = 3-dehydroshikimate + H2O. It catalyses the reaction shikimate + NADP(+) = 3-dehydroshikimate + NADPH + H(+). The enzyme catalyses shikimate + ATP = 3-phosphoshikimate + ADP + H(+). The catalysed reaction is 3-phosphoshikimate + phosphoenolpyruvate = 5-O-(1-carboxyvinyl)-3-phosphoshikimate + phosphate. Its pathway is metabolic intermediate biosynthesis; chorismate biosynthesis; chorismate from D-erythrose 4-phosphate and phosphoenolpyruvate: step 2/7. It functions in the pathway metabolic intermediate biosynthesis; chorismate biosynthesis; chorismate from D-erythrose 4-phosphate and phosphoenolpyruvate: step 3/7. It participates in metabolic intermediate biosynthesis; chorismate biosynthesis; chorismate from D-erythrose 4-phosphate and phosphoenolpyruvate: step 4/7. The protein operates within metabolic intermediate biosynthesis; chorismate biosynthesis; chorismate from D-erythrose 4-phosphate and phosphoenolpyruvate: step 5/7. Its pathway is metabolic intermediate biosynthesis; chorismate biosynthesis; chorismate from D-erythrose 4-phosphate and phosphoenolpyruvate: step 6/7. In terms of biological role, the AROM polypeptide catalyzes 5 consecutive enzymatic reactions in prechorismate polyaromatic amino acid biosynthesis. The protein is Pentafunctional AROM polypeptide of Candida albicans (strain SC5314 / ATCC MYA-2876) (Yeast).